The sequence spans 223 residues: 7-carboxy-7-deazaguanine synthase (223 aa).

Substrate contacts are provided by residues leucine 12 to glycine 14 and arginine 27. A Radical SAM core domain is found at phenylalanine 18–alanine 223. [4Fe-4S] cluster is bound by residues cysteine 31, cysteine 35, and cysteine 38. Threonine 40 serves as a coordination point for Mg(2+). Substrate is bound at residue threonine 92. S-adenosyl-L-methionine-binding positions include glycine 94 and serine 136 to lysine 138.

The protein belongs to the radical SAM superfamily. 7-carboxy-7-deazaguanine synthase family. As to quaternary structure, homodimer. It depends on [4Fe-4S] cluster as a cofactor. S-adenosyl-L-methionine serves as cofactor. Requires Mg(2+) as cofactor.

The enzyme catalyses 6-carboxy-5,6,7,8-tetrahydropterin + H(+) = 7-carboxy-7-deazaguanine + NH4(+). Its pathway is purine metabolism; 7-cyano-7-deazaguanine biosynthesis. In terms of biological role, catalyzes the complex heterocyclic radical-mediated conversion of 6-carboxy-5,6,7,8-tetrahydropterin (CPH4) to 7-carboxy-7-deazaguanine (CDG), a step common to the biosynthetic pathways of all 7-deazapurine-containing compounds. The protein is 7-carboxy-7-deazaguanine synthase of Escherichia coli (strain K12).